A 520-amino-acid polypeptide reads, in one-letter code: Cryptochrome DASH (520 aa).

The region spanning arginine 5 to leucine 141 is the Photolyase/cryptochrome alpha/beta domain. Positions serine 479–glutamine 504 are disordered.

This sequence belongs to the DNA photolyase class-1 family. Requires FAD as cofactor. (6R)-5,10-methylene-5,6,7,8-tetrahydrofolate is required as a cofactor.

Its function is as follows. May have a photoreceptor function. Has weak cyclobutyl pyrimidine photolyase activity when expressed in E.coli and when tested in vitro. In Danio rerio (Zebrafish), this protein is Cryptochrome DASH (cry-dash).